Here is a 104-residue protein sequence, read N- to C-terminus: NADH-quinone oxidoreductase subunit K (104 aa).

The next 3 membrane-spanning stretches (helical) occupy residues 4–24 (VPAS…LFGA), 31–51 (VIVL…LVAF), and 67–87 (LFTM…LIAL).

Belongs to the complex I subunit 4L family. In terms of assembly, NDH-1 is composed of 14 different subunits. Subunits NuoA, H, J, K, L, M, N constitute the membrane sector of the complex.

Its subcellular location is the cell membrane. The catalysed reaction is a quinone + NADH + 5 H(+)(in) = a quinol + NAD(+) + 4 H(+)(out). Functionally, NDH-1 shuttles electrons from NADH, via FMN and iron-sulfur (Fe-S) centers, to quinones in the respiratory chain. The immediate electron acceptor for the enzyme in this species is believed to be a menaquinone. Couples the redox reaction to proton translocation (for every two electrons transferred, four hydrogen ions are translocated across the cytoplasmic membrane), and thus conserves the redox energy in a proton gradient. The polypeptide is NADH-quinone oxidoreductase subunit K (Bacillus cereus (strain AH820)).